We begin with the raw amino-acid sequence, 521 residues long: MEVNGGGAAGLPEAWSQVRAPVIVPLLRLAVAVCLTMSVLLFLERMYMAVVISGVKILRRRPDRRYRCDPIPDDDPELGTSAFPVVLIQIPMFNEREVYQLSIGAVCGLSWPSDRLVVQVLDDSTDPVIKEMVRIECERWAHKGVNITYQIRENRKGYKAGALKEGMKHGYVRECEYVAIFDADFQPDPDFLRRTIPFLVHNSDIALVQARWRFVNADECLMTRMQEMSLDYHFTVEQEVSSSVCAFFGFNGTAGVWRVSAVNEAGGWKDRTTVEDMDLAIRASLKGWKFVYLGDVQVKSELPSTFKAFRFQQHRWSCGPANLFRKMLMEIVRNKKVTIWKKIHVIYNFFLIRKIIAHIVTFAFYCLIIPATIFVPEVRIPKWGCVYIPTIITLLNSVGTPRSFHLLFFWILFENVMSLHRTKATLIGLLEAGRANEWVVTEKLGNALKMKSSSKSSAKKSFMRVWDRLNVTELGVAAFLFSCGWYDLAFGKDHFFIYLFFQGAAFFIVGIGYVGTIVPQS.

Residues 22-42 traverse the membrane as a helical segment; the sequence is VIVPLLRLAVAVCLTMSVLLF. D123 is an active-site residue. The substrate site is built by D182 and D184. The active site involves D276. A run of 4 helical transmembrane segments spans residues 355–375, 391–411, 471–491, and 495–515; these read IIAH…TIFV, IITL…FFWI, VTEL…LAFG, and FFIY…GYVG.

It belongs to the glycosyltransferase 2 family. Plant cellulose synthase-like A subfamily.

It is found in the golgi apparatus membrane. The enzyme catalyses GDP-mannose + (glucomannan)n = GDP + (glucomannan)n+1.. Functionally, possesses glucomannan synthase and mannan synthase activities in vitro. Mannan synthase consists of a 4-beta-mannosyltransferase activity on mannan using GDP-mannose. The beta-1,4-mannan product is the backbone for galactomannan synthesis by galactomannan galactosyltransferase. Galactomannan is a noncellulosic polysaccharides of plant cell wall. This Oryza sativa subsp. japonica (Rice) protein is Glucomannan 4-beta-mannosyltransferase 1.